Here is an 836-residue protein sequence, read N- to C-terminus: Glutamate receptor ionotropic, kainate 1 (836 aa).

The first 30 residues, 1–30, serve as a signal peptide directing secretion; the sequence is MERGTVLIQPGLWTRDTSWTLLYFLCYILP. The Extracellular portion of the chain corresponds to 31–561; sequence QTSPQVLRIG…VFSFLNPLSP (531 aa). Asparagine 68, asparagine 74, asparagine 276, asparagine 379, asparagine 413, asparagine 424, and asparagine 431 each carry an N-linked (GlcNAc...) asparagine glycan. Proline 516, threonine 518, and arginine 523 together coordinate L-glutamate. Asparagine 546 carries an N-linked (GlcNAc...) asparagine glycan. A helical membrane pass occupies residues 562–582; that stretch reads DIWMYVLLACLGVSCVLFVIA. The Cytoplasmic portion of the chain corresponds to 583 to 638; the sequence is RFTPYEWYNPHPCNPDSDVVENNFTLLNSFWFGVGALMQQGSELMPKALSTRIVGG. The helical transmembrane segment at 639–659 threads the bilayer; that stretch reads IWWFFTLIIISSYTANLAAFL. Residues 660-721 lie on the Extracellular side of the membrane; the sequence is TVERMESPID…RQPSALGVEN (62 aa). 2 residues coordinate L-glutamate: serine 689 and threonine 690. The chain crosses the membrane as a helical span at residues 722-742; sequence IGGIFIVLAAGLVLSVFVAIG. The Cytoplasmic portion of the chain corresponds to 743 to 836; the sequence is EFIYKSRKNN…RRTQRKETVA (94 aa).

It belongs to the glutamate-gated ion channel (TC 1.A.10.1) family. GRIK1 subfamily. Homotetramer or heterotetramer of pore-forming glutamate receptor subunits. Tetramers may be formed by the dimerization of dimers. Can form functional heteromeric receptors with GRIK4 and GRIK5. Interacts with KLHL17. Most abundant in the cerebellum. Also present in the suprachiasmatic nuclei of the hypothalamus.

It is found in the cell membrane. It localises to the postsynaptic cell membrane. The catalysed reaction is Ca(2+)(in) = Ca(2+)(out). Ionotropic glutamate receptor that functions as a cation-permeable ligand-gated ion channel, gated by L-glutamate and the glutamatergic agonist kainic acid. L-glutamate acts as an excitatory neurotransmitter at many synapses in the central nervous system. Binding of the excitatory neurotransmitter L-glutamate induces a conformation change, leading to the opening of the cation channel, and thereby converts the chemical signal to an electrical impulse. The receptor then desensitizes rapidly and enters a transient inactive state, characterized by the presence of bound agonist. This is Glutamate receptor ionotropic, kainate 1 (Grik1) from Mus musculus (Mouse).